Reading from the N-terminus, the 957-residue chain is Ribonuclease 3-like protein 3 (957 aa).

One can recognise an RNase III 1 domain in the interval Val4–Asn142. In terms of domain architecture, DRBM 1 spans Asn307–Ser382. In terms of domain architecture, RNase III 2 spans Val415–Lys551. DRBM domains follow at residues Glu566 to Glu645 and Asp837 to Ser912.

Ribonuclease that cleaves double-stranded RNA (dsRNA). The protein is Ribonuclease 3-like protein 3 (RTL3) of Arabidopsis thaliana (Mouse-ear cress).